Reading from the N-terminus, the 337-residue chain is Methylthioribose-1-phosphate isomerase (337 aa).

Substrate-binding positions include 51-53 (RGA), arginine 88, and glutamine 187. Aspartate 228 serves as the catalytic Proton donor. Residue 238 to 239 (NK) coordinates substrate.

This sequence belongs to the eIF-2B alpha/beta/delta subunits family. MtnA subfamily.

The enzyme catalyses 5-(methylsulfanyl)-alpha-D-ribose 1-phosphate = 5-(methylsulfanyl)-D-ribulose 1-phosphate. Its pathway is amino-acid biosynthesis; L-methionine biosynthesis via salvage pathway; L-methionine from S-methyl-5-thio-alpha-D-ribose 1-phosphate: step 1/6. Its function is as follows. Catalyzes the interconversion of methylthioribose-1-phosphate (MTR-1-P) into methylthioribulose-1-phosphate (MTRu-1-P). The protein is Methylthioribose-1-phosphate isomerase of Anaeromyxobacter sp. (strain Fw109-5).